We begin with the raw amino-acid sequence, 140 residues long: Organic hydroperoxide resistance protein-like (140 aa).

It belongs to the OsmC/Ohr family.

The chain is Organic hydroperoxide resistance protein-like from Staphylococcus aureus (strain USA300).